We begin with the raw amino-acid sequence, 498 residues long: Calcium-binding tyrosine phosphorylation-regulated protein (498 aa).

An RIIa domain is found at 12 to 49 (YGLKTLLEGVSRAILKINPPNITQFAAVYFKELIVFRE). 3 disordered regions span residues 74-107 (GTTQEKEPECMEEQVETSVVSQEPTRMEKSTDTE), 135-164 (EETPEAACGGSPKPSTPKAVTPPSSPSPAA), and 247-279 (VDLGPKPKDDEAEPTTASSFPLQDEQDPPAYDQ). Positions 145–164 (SPKPSTPKAVTPPSSPSPAA) are enriched in low complexity.

Interacts with FSCB. In terms of processing, phosphorylated on tyrosine residues during in vitro capacitation. Dephosphorylation affects its ability to bind calcium. As to expression, expressed in testis.

It is found in the cytoplasm. Its subcellular location is the cytoskeleton. It localises to the cell projection. The protein resides in the cilium. The protein localises to the flagellum. Its function is as follows. May function as a regulator of both motility- and head-associated functions such as capacitation and the acrosome reaction. Binds calcium in vitro. The protein is Calcium-binding tyrosine phosphorylation-regulated protein (CABYR) of Vulpes vulpes (Red fox).